Reading from the N-terminus, the 355-residue chain is MNFKDKNCFPNELIALAKISKNDVLDKFGTDVFKKVVYDVLTGKNVREFTEILTRTRLLESNLSFFDFFVDKMKEGITPKQLYLYAKNALSNKSYVKSNQPVLEWMVMMTNKQTQNVLRDEHGDGFDRLALRTQEEILKIKNGYEDKIGEISIGGQKVSLEDFCYIILSLGSQTLTIRGSEKSLHGKYFEKLILGSLFTIMGFEYKEKIEEGLNAKCFTLSTRADDRESDATLVFNGKAIRVDIGFIGRGNTEISLDKVSRFRRMDDIGGVMHNISTMVIVDVIGDRSRIVNMAEEIDGKVVAMSDPYWVAKVSSYISSKLNVDDLLEDKPQLKDIQSFISDALENVDLEKYIKL.

The catalysed reaction is Endonucleolytic cleavage of DNA to give specific double-stranded fragments with terminal 5'-phosphates.. In terms of biological role, a P subtype restriction enzyme that recognizes the double-stranded sequence 5'-CCWWGG-3' and cleaves after C-1. This is Type II restriction enzyme CfrBI from Citrobacter freundii.